The sequence spans 983 residues: Receptor-type tyrosine-protein phosphatase-like N (983 aa).

An N-terminal signal peptide occupies residues 1-40; that stretch reads MRRPRRPGGPAGCGGSEGSGGLRLLVCLLLLSGRPGGCSA. The interval 41-137 is RESP18 homology domain; it reads ISAHGCLFDR…HPRDRSGSVP (97 aa). The Lumenal portion of the chain corresponds to 41 to 579; sequence ISAHGCLFDR…RQAHGISPMR (539 aa). The cysteines at positions 59 and 68 are disulfide-linked. A compositionally biased stretch (basic and acidic residues) spans 118 to 133; it reads RIPRLRPPEPHPRDRS. 3 disordered regions span residues 118–179, 293–330, and 399–420; these read RIPR…SPLS, RARA…SPPQ, and GDTA…ASST. The span at 148 to 158 shows a compositional bias: polar residues; it reads SQGNPTGSSPA. The span at 307-326 shows a compositional bias: basic and acidic residues; that stretch reads RAEDSSEGHEEEVLGGHGEK. 2 positions are modified to phosphoserine: S311 and S312. A sufficient for dimerization of proICA512 region spans residues 453 to 579; the sequence is SPLGQSQPTV…RQAHGISPMR (127 aa). N510 and N528 each carry an N-linked (GlcNAc...) asparagine glycan. Residues 580–604 form a helical membrane-spanning segment; that stretch reads SLLLTLVALAGVAGLLVALAVALCM. Residues 605–736 form a sufficient for dimerization of proICA512 region; the sequence is RHHSKQRDKE…PNTCATAQGE (132 aa). Over 605-983 the chain is Cytoplasmic; sequence RHHSKQRDKE…VNAILKALPQ (379 aa). Residues 648–684 are disordered; it reads RAEGQPEPSRVSSVSSQFSDAAQASPSSHSSTPSWCE. The span at 652-681 shows a compositional bias: low complexity; that stretch reads QPEPSRVSSVSSQFSDAAQASPSSHSSTPS. The Tyrosine-protein phosphatase domain occupies 713 to 973; the sequence is LAKEWQALCA…EFALTAVAEE (261 aa). A Glycyl lysine isopeptide (Lys-Gly) (interchain with G-Cter in SUMO) cross-link involves residue K758.

This sequence belongs to the protein-tyrosine phosphatase family. Receptor class 8 subfamily. In terms of assembly, homodimer; shown for the unprocessed protein (proICA512) in the endoplasmic reticulum and resolved during protein maturation as ICA512-TMF seems to be predominantly monomeric in secretory granules; however, ICA512-CCF interacts with ICA512-TMF disrupting the ICA512-TMF:SNTB2 complex. The isolated lumenal RESP18 homology domain has been shown to form disulfide-linked homooligomers. Interacts (via cytoplasmic domain) with phosphorylated SNTB2; this protects PTPRN against cleavage by CAPN1 to produce ICA512-CCF. Dephosphorylation of SNTB2 upon insulin stimulation disrupts the interaction and results in PTPRN cleavage. Interacts with SNX19. ICA512-CCF interacts with PIAS4; in the nucleus. Interacts with STAT5B (phosphorylated); down-regulated by ICA512-CCF sumoylation; ICA512-CCF prevents STAT5B dephosphorylation; ICA512-CCF mediates interaction of STAT5B with PIAS4. Interacts (via RESP18 homology domain) with insulin and proinsulin. Interacts with PTPRN2, PTPRA and PTPRE. In terms of processing, subject to proteolytic cleavage at multiple sites. Subject to cleavage on a pair of basic residues. Following exocytosis of secretory granules in pancreatic beta-cells ICA512-TMF located in the plasma-membrane is cleaved by mu-type calpain CPN1 to yield ICA512-CCF. N-glycosylated. Post-translationally, O-glycosylated. In terms of processing, sumoylated at two sites including Lys-758. Sumoylation decreases interaction with STAT5. Detected in pancreas islets. Detected in pancreas alpha, beta and delta cells, and in chromaffin cells in the adrenal medulla. Detected in amygdala, hypothalamus, autonomous nerve fibers and ganglia, especially at synaptic contacts. Detected in pituitary (at protein level). Detected in brain, specifically in cerebral cortex, diencephalon and brain stem.

The protein localises to the membrane. It localises to the cytoplasmic vesicle. The protein resides in the secretory vesicle membrane. It is found in the perikaryon. Its subcellular location is the cell projection. The protein localises to the axon. It localises to the synapse. The protein resides in the cell membrane. It is found in the endosome. Its subcellular location is the nucleus. Functionally, plays a role in vesicle-mediated secretory processes. Required for normal accumulation of secretory vesicles in hippocampus, pituitary and pancreatic islets. Required for the accumulation of normal levels of insulin-containing vesicles and preventing their degradation. Plays a role in insulin secretion in response to glucose stimuli. Required for normal accumulation of the neurotransmitters norepinephrine, dopamine and serotonin in the brain. In females, but not in males, required for normal accumulation and secretion of pituitary hormones, such as luteinizing hormone (LH) and follicle-stimulating hormone (FSH). Required to maintain normal levels of renin expression and renin release. Seems to lack intrinsic enzyme activity. In terms of biological role, ICA512-TMF regulates dynamics and exocytosis of insulin secretory granules (SGs); binding of ICA512-TMF to SNTB2/beta-2-syntrophin is proposed to restrain SGs mobility and exocytosis by tethering them to the actin cytoskeleton depending on UTRN; the function is inhibited by cytoplasmic ICA512-CFF dimerizing with ICA512-TMF and displacing SNTB2. ICA512-CCF translocated to the nucleus promotes expression of insulin and other granule-related genes; the function implicates binding to and regulating activity of STAT5B probably by preventing its dephosphorylation and potentially by inducing its sumoylation by recruiting PIAS4. Enhances pancreatic beta-cell proliferation by converging with signaling by STAT5B and STAT3. ICA512-CCF located in the cytoplasm regulates dynamics and exocytosis of insulin secretory granules (SGs) by dimerizing with ICA512-TMF and displacing SNTB2 thus enhancing SGs mobility and exocytosis. This Rattus norvegicus (Rat) protein is Receptor-type tyrosine-protein phosphatase-like N (Ptprn).